Reading from the N-terminus, the 1258-residue chain is Regulator of G-protein signaling 22 (1258 aa).

The tract at residues Q581–K604 is disordered. RGS domains follow at residues T845–Q973 and A1014–K1138. The interval R1145 to A1172 is disordered. Positions K1154 to G1164 are enriched in basic and acidic residues.

Interacts with GNA11, GNA12 and GNA13. Expressed testis, including in Leydig cells and spermatogenic cells from the spermatogonia to spermatid stages (at protein level).

The protein resides in the cytoplasm. It localises to the nucleus. Functionally, inhibits signal transduction by increasing the GTPase activity of G protein alpha subunits thereby driving them into their inactive GDP-bound form. In Mus musculus (Mouse), this protein is Regulator of G-protein signaling 22 (Rgs22).